Consider the following 615-residue polypeptide: DNA mismatch repair protein MutL (615 aa).

Residues 363–397 form a disordered region; it reads FAEPAAREPVAPRYTPAPASGSRPAAPWPNAQPGY. The span at 364 to 391 shows a compositional bias: low complexity; that stretch reads AEPAAREPVAPRYTPAPASGSRPAAPWP.

Belongs to the DNA mismatch repair MutL/HexB family.

In terms of biological role, this protein is involved in the repair of mismatches in DNA. It is required for dam-dependent methyl-directed DNA mismatch repair. May act as a 'molecular matchmaker', a protein that promotes the formation of a stable complex between two or more DNA-binding proteins in an ATP-dependent manner without itself being part of a final effector complex. This is DNA mismatch repair protein MutL from Escherichia coli (strain ATCC 8739 / DSM 1576 / NBRC 3972 / NCIMB 8545 / WDCM 00012 / Crooks).